Consider the following 249-residue polypeptide: Cysteine-rich secretory protein 1 (249 aa).

A signal peptide spans Met1 to Ser20. One can recognise an SCP domain in the interval Val45–Tyr175. A glycan (N-linked (GlcNAc...) asparagine) is linked at Asn104. Intrachain disulfides connect Cys195–Cys202, Cys198–Cys207, Cys211–Cys244, Cys220–Cys238, and Cys229–Cys242. Positions Cys211–Cys244 constitute a ShKT domain. Residue Asn230 is glycosylated (N-linked (GlcNAc...) asparagine).

It belongs to the CRISP family. In terms of tissue distribution, expressed in all the regions of the epididymis except the caput and is not detected in the testis, prostate, seminal vesicle, and brain.

In terms of biological role, may have a role in sperm-egg fusion and maturation. In Macaca mulatta (Rhesus macaque), this protein is Cysteine-rich secretory protein 1 (CRISP1).